A 205-amino-acid chain; its full sequence is Holliday junction branch migration complex subunit RuvA (205 aa).

Positions 1–67 (MITSIFGKVT…QIIEEAFAFN (67 aa)) are domain I. Positions 68-146 (TLEEKEWFCR…NNKNIKGVQV (79 aa)) are domain II. Residues 147–150 (ADGY) are flexible linker. The domain III stretch occupies residues 150–205 (YDELFETLKSLGYKQQEIQDALKMIEVKPDFDISQLVAEVIKLMSFKNNEITNKTA).

This sequence belongs to the RuvA family. As to quaternary structure, homotetramer. Forms an RuvA(8)-RuvB(12)-Holliday junction (HJ) complex. HJ DNA is sandwiched between 2 RuvA tetramers; dsDNA enters through RuvA and exits via RuvB. An RuvB hexamer assembles on each DNA strand where it exits the tetramer. Each RuvB hexamer is contacted by two RuvA subunits (via domain III) on 2 adjacent RuvB subunits; this complex drives branch migration. In the full resolvosome a probable DNA-RuvA(4)-RuvB(12)-RuvC(2) complex forms which resolves the HJ.

It localises to the cytoplasm. Functionally, the RuvA-RuvB-RuvC complex processes Holliday junction (HJ) DNA during genetic recombination and DNA repair, while the RuvA-RuvB complex plays an important role in the rescue of blocked DNA replication forks via replication fork reversal (RFR). RuvA specifically binds to HJ cruciform DNA, conferring on it an open structure. The RuvB hexamer acts as an ATP-dependent pump, pulling dsDNA into and through the RuvAB complex. HJ branch migration allows RuvC to scan DNA until it finds its consensus sequence, where it cleaves and resolves the cruciform DNA. The chain is Holliday junction branch migration complex subunit RuvA from Mycoplasma genitalium (strain ATCC 33530 / DSM 19775 / NCTC 10195 / G37) (Mycoplasmoides genitalium).